A 201-amino-acid chain; its full sequence is 3-isopropylmalate dehydratase small subunit (201 aa).

The protein belongs to the LeuD family. LeuD type 1 subfamily. As to quaternary structure, heterodimer of LeuC and LeuD.

The enzyme catalyses (2R,3S)-3-isopropylmalate = (2S)-2-isopropylmalate. The protein operates within amino-acid biosynthesis; L-leucine biosynthesis; L-leucine from 3-methyl-2-oxobutanoate: step 2/4. Functionally, catalyzes the isomerization between 2-isopropylmalate and 3-isopropylmalate, via the formation of 2-isopropylmaleate. This is 3-isopropylmalate dehydratase small subunit from Dinoroseobacter shibae (strain DSM 16493 / NCIMB 14021 / DFL 12).